Consider the following 340-residue polypeptide: Ketol-acid reductoisomerase (NADP(+)) (340 aa).

The KARI N-terminal Rossmann domain maps to 5 to 182; sequence MEYEKDVKVA…GSARVGLLET (178 aa). NADP(+) contacts are provided by residues 26 to 29, R49, S53, and 83 to 86; these read YGSQ and DEIQ. The active site involves H108. G134 is a binding site for NADP(+). In terms of domain architecture, KARI C-terminal knotted spans 183–328; it reads TYKEETEEDL…AELRKAMPFV (146 aa). Mg(2+) is bound by residues D191, E195, E227, and E231. S252 provides a ligand contact to substrate.

It belongs to the ketol-acid reductoisomerase family. Mg(2+) serves as cofactor.

The enzyme catalyses (2R)-2,3-dihydroxy-3-methylbutanoate + NADP(+) = (2S)-2-acetolactate + NADPH + H(+). It carries out the reaction (2R,3R)-2,3-dihydroxy-3-methylpentanoate + NADP(+) = (S)-2-ethyl-2-hydroxy-3-oxobutanoate + NADPH + H(+). It participates in amino-acid biosynthesis; L-isoleucine biosynthesis; L-isoleucine from 2-oxobutanoate: step 2/4. It functions in the pathway amino-acid biosynthesis; L-valine biosynthesis; L-valine from pyruvate: step 2/4. Functionally, involved in the biosynthesis of branched-chain amino acids (BCAA). Catalyzes an alkyl-migration followed by a ketol-acid reduction of (S)-2-acetolactate (S2AL) to yield (R)-2,3-dihydroxy-isovalerate. In the isomerase reaction, S2AL is rearranged via a Mg-dependent methyl migration to produce 3-hydroxy-3-methyl-2-ketobutyrate (HMKB). In the reductase reaction, this 2-ketoacid undergoes a metal-dependent reduction by NADPH to yield (R)-2,3-dihydroxy-isovalerate. In Streptococcus sanguinis (strain SK36), this protein is Ketol-acid reductoisomerase (NADP(+)).